The primary structure comprises 455 residues: UDP-N-acetylmuramoylalanine--D-glutamate ligase (455 aa).

120-126 lines the ATP pocket; sequence GSNGKTT.

The protein belongs to the MurCDEF family.

Its subcellular location is the cytoplasm. The enzyme catalyses UDP-N-acetyl-alpha-D-muramoyl-L-alanine + D-glutamate + ATP = UDP-N-acetyl-alpha-D-muramoyl-L-alanyl-D-glutamate + ADP + phosphate + H(+). Its pathway is cell wall biogenesis; peptidoglycan biosynthesis. Functionally, cell wall formation. Catalyzes the addition of glutamate to the nucleotide precursor UDP-N-acetylmuramoyl-L-alanine (UMA). The sequence is that of UDP-N-acetylmuramoylalanine--D-glutamate ligase from Pediococcus pentosaceus (strain ATCC 25745 / CCUG 21536 / LMG 10740 / 183-1w).